The primary structure comprises 396 residues: MAIRIKLKPGREKSLERRHPWVFSNGIHNVKGKPEPGQTVDVVAHDGHWLGRGAWSGESQIQVRVWTFDREEEIDREFFKRRILRAQAGRDDLIREQGLTGYRLIAAESDGLPGITIDKYANVLVCQLLSMGADVWRDTIVDVLAELYPDCAIYERSDVDSRKKEGLASTMGLLHGTLPEMPLIIEENGIKIAVDVTKGHKTGFYLDQRDNRAIAARFVKGKSVLNCFCYTGTFGLYAAKAGAASIENVDVSSLALDTARLNMRVNGLSDDNVHYNEADVFKLLRQYRDEGKTFDVIVLDPPKFADNKSQLNGACRGYKDINMIALQLLNPGGVLLTFSCSGLMPADLFQKIVADAALDAKREIQFIERLSQASDHPIGSAFPEGFYLKGLVARVW.

The 78-residue stretch at 2-79 (AIRIKLKPGR…REEEIDREFF (78 aa)) folds into the PUA domain.

It belongs to the methyltransferase superfamily. RlmI family.

Its subcellular location is the cytoplasm. The catalysed reaction is cytidine(1962) in 23S rRNA + S-adenosyl-L-methionine = 5-methylcytidine(1962) in 23S rRNA + S-adenosyl-L-homocysteine + H(+). Its function is as follows. Specifically methylates the cytosine at position 1962 (m5C1962) of 23S rRNA. The protein is Ribosomal RNA large subunit methyltransferase I of Shewanella oneidensis (strain ATCC 700550 / JCM 31522 / CIP 106686 / LMG 19005 / NCIMB 14063 / MR-1).